The chain runs to 77 residues: DNA-directed RNA polymerase subunit epsilon (77 aa).

Belongs to the RNA polymerase subunit epsilon family. As to quaternary structure, RNAP is composed of a core of 2 alpha, a beta and a beta' subunit. The core is associated with a delta subunit, and at least one of epsilon or omega. When a sigma factor is associated with the core the holoenzyme is formed, which can initiate transcription.

The enzyme catalyses RNA(n) + a ribonucleoside 5'-triphosphate = RNA(n+1) + diphosphate. Functionally, a non-essential component of RNA polymerase (RNAP). The protein is DNA-directed RNA polymerase subunit epsilon of Streptococcus pneumoniae serotype 19F (strain G54).